Consider the following 228-residue polypeptide: Ribose-5-phosphate isomerase A (228 aa).

Substrate-binding positions include 32-35 (TGST), 85-88 (DGAD), and 98-101 (KGGG). E107 functions as the Proton acceptor in the catalytic mechanism. K125 provides a ligand contact to substrate.

It belongs to the ribose 5-phosphate isomerase family. Homodimer.

The enzyme catalyses aldehydo-D-ribose 5-phosphate = D-ribulose 5-phosphate. It functions in the pathway carbohydrate degradation; pentose phosphate pathway; D-ribose 5-phosphate from D-ribulose 5-phosphate (non-oxidative stage): step 1/1. In terms of biological role, catalyzes the reversible conversion of ribose-5-phosphate to ribulose 5-phosphate. The protein is Ribose-5-phosphate isomerase A of Cupriavidus necator (strain ATCC 17699 / DSM 428 / KCTC 22496 / NCIMB 10442 / H16 / Stanier 337) (Ralstonia eutropha).